The sequence spans 189 residues: Inosine triphosphate pyrophosphatase (189 aa).

8–13 contacts ITP; that stretch reads TGNANK. A Mg(2+)-binding site is contributed by E39. Residues K51, 67–68, K84, 143–146, K167, and 172–173 each bind ITP; these read DT, FGWD, and HR.

The protein belongs to the HAM1 NTPase family. As to quaternary structure, homodimer. It depends on Mg(2+) as a cofactor. The cofactor is Mn(2+).

The protein localises to the cytoplasm. It is found in the nucleus. It catalyses the reaction ITP + H2O = IMP + diphosphate + H(+). The catalysed reaction is dITP + H2O = dIMP + diphosphate + H(+). The enzyme catalyses XTP + H2O = XMP + diphosphate + H(+). Its function is as follows. Pyrophosphatase that hydrolyzes non-canonical purine nucleotides such as inosine triphosphate (ITP), deoxyinosine triphosphate (dITP) or xanthosine 5'-triphosphate (XTP) to their respective monophosphate derivatives. The enzyme does not distinguish between the deoxy- and ribose forms. Probably excludes non-canonical purines from RNA and DNA precursor pools, thus preventing their incorporation into RNA and DNA and avoiding chromosomal lesions. The sequence is that of Inosine triphosphate pyrophosphatase from Cryptococcus neoformans var. neoformans serotype D (strain JEC21 / ATCC MYA-565) (Filobasidiella neoformans).